A 399-amino-acid chain; its full sequence is uncharacterized protein (399 aa).

10 consecutive transmembrane segments (helical) span residues 6 to 26 (HLTFTINLLVSLFFLTILIIP), 27 to 47 (KGYNYAPIILSAIGLIYFIPL), 60 to 80 (LIFSFLFYFFTFLLSIIINKD), 111 to 131 (ILYAIPSSALITGCVALFQKF), 147 to 167 (MGNIAISLATFSIVITLHFFI), 173 to 193 (STLFGFVAIILAIMTSALSGA), 195 to 215 (GGWIGLPVVVGIILFLYKEFI), 220 to 240 (IITLIAIITIGLTALITSPKF), 328 to 348 (GLVGFIALILIILTPIFYFIK), and 362 to 382 (ILGIIHIVSHIFYFTSQSFLA).

Its subcellular location is the cell membrane. This is an uncharacterized protein from Haemophilus influenzae (strain ATCC 51907 / DSM 11121 / KW20 / Rd).